A 245-amino-acid polypeptide reads, in one-letter code: Ribosomal RNA small subunit methyltransferase G (245 aa).

S-adenosyl-L-methionine contacts are provided by residues Gly90, Leu95, 140-141 (AE), and Arg158. The tract at residues 223-245 (VVSARRAKPPHPKSARTGKAGTR) is disordered. Positions 227–245 (RRAKPPHPKSARTGKAGTR) are enriched in basic residues.

It belongs to the methyltransferase superfamily. RNA methyltransferase RsmG family.

It localises to the cytoplasm. Specifically methylates the N7 position of guanine in position 518 of 16S rRNA. This chain is Ribosomal RNA small subunit methyltransferase G, found in Mycobacterium avium (strain 104).